Here is a 525-residue protein sequence, read N- to C-terminus: Peptide chain release factor 3 (525 aa).

The tr-type G domain maps to 9–276; the sequence is AKRRTFAIIS…GFTRYAPAPQ (268 aa). GTP contacts are provided by residues 18–25, 86–90, and 140–143; these read SHPDAGKT, DTPGH, and NKFD.

Belongs to the TRAFAC class translation factor GTPase superfamily. Classic translation factor GTPase family. PrfC subfamily.

Its subcellular location is the cytoplasm. Increases the formation of ribosomal termination complexes and stimulates activities of RF-1 and RF-2. It binds guanine nucleotides and has strong preference for UGA stop codons. It may interact directly with the ribosome. The stimulation of RF-1 and RF-2 is significantly reduced by GTP and GDP, but not by GMP. In Francisella tularensis subsp. holarctica (strain FTNF002-00 / FTA), this protein is Peptide chain release factor 3.